The following is a 216-amino-acid chain: GTP cyclohydrolase 1 (216 aa).

3 residues coordinate Zn(2+): cysteine 109, histidine 112, and cysteine 180.

This sequence belongs to the GTP cyclohydrolase I family. As to quaternary structure, toroid-shaped homodecamer, composed of two pentamers of five dimers.

The enzyme catalyses GTP + H2O = 7,8-dihydroneopterin 3'-triphosphate + formate + H(+). It functions in the pathway cofactor biosynthesis; 7,8-dihydroneopterin triphosphate biosynthesis; 7,8-dihydroneopterin triphosphate from GTP: step 1/1. The protein is GTP cyclohydrolase 1 of Wigglesworthia glossinidia brevipalpis.